A 229-amino-acid polypeptide reads, in one-letter code: 7-cyano-7-deazaguanine synthase (229 aa).

Residue 15-25 (LSGGLDSATVV) participates in ATP binding. The Zn(2+) site is built by C194, C204, C207, and C210.

This sequence belongs to the QueC family. Zn(2+) is required as a cofactor.

The enzyme catalyses 7-carboxy-7-deazaguanine + NH4(+) + ATP = 7-cyano-7-deazaguanine + ADP + phosphate + H2O + H(+). It participates in purine metabolism; 7-cyano-7-deazaguanine biosynthesis. Functionally, catalyzes the ATP-dependent conversion of 7-carboxy-7-deazaguanine (CDG) to 7-cyano-7-deazaguanine (preQ(0)). This Pseudomonas syringae pv. syringae (strain B728a) protein is 7-cyano-7-deazaguanine synthase.